A 299-amino-acid chain; its full sequence is Protein-methionine-sulfoxide reductase catalytic subunit MsrP (299 aa).

The segment at residues 1–44 is a signal peptide (tat-type signal); it reads MAHRWINDLTPADITPRGAWMNRRQVMAGMAGAGLAAFAGSAQA. Mo-molybdopterin is bound by residues N59, 62 to 63, C117, T152, N200, R205, and 216 to 218; these read YE and SIK.

This sequence belongs to the MsrP family. Heterodimer of a catalytic subunit (MsrP) and a heme-binding subunit (MsrQ). Mo-molybdopterin is required as a cofactor. In terms of processing, predicted to be exported by the Tat system. The position of the signal peptide cleavage has not been experimentally proven.

It localises to the periplasm. It carries out the reaction L-methionyl-[protein] + a quinone + H2O = L-methionyl-(S)-S-oxide-[protein] + a quinol. It catalyses the reaction L-methionyl-[protein] + a quinone + H2O = L-methionyl-(R)-S-oxide-[protein] + a quinol. In terms of biological role, part of the MsrPQ system that repairs oxidized periplasmic proteins containing methionine sulfoxide residues (Met-O), using respiratory chain electrons. Thus protects these proteins from oxidative-stress damage caused by reactive species of oxygen and chlorine generated by the host defense mechanisms. MsrPQ is essential for the maintenance of envelope integrity under bleach stress, rescuing a wide series of structurally unrelated periplasmic proteins from methionine oxidation. The catalytic subunit MsrP is non-stereospecific, being able to reduce both (R-) and (S-) diastereoisomers of methionine sulfoxide. This is Protein-methionine-sulfoxide reductase catalytic subunit MsrP from Ruegeria pomeroyi (strain ATCC 700808 / DSM 15171 / DSS-3) (Silicibacter pomeroyi).